The following is a 236-amino-acid chain: T-cell surface glycoprotein CD8 alpha chain (236 aa).

The N-terminal stretch at 1-26 is a signal peptide; that stretch reads MASRVICFLSLNLLLLDVITRLQVSG. The Ig-like V-type domain maps to 27 to 130; that stretch reads QLQLSPKKVD…ITSNSVMYFS (104 aa). Topologically, residues 27-189 are extracellular; it reads QLQLSPKKVD…MGLGFACDIY (163 aa). Residues C47 and C119 are joined by a disulfide bond. An N-linked (GlcNAc...) asparagine glycan is attached at N63. An O-linked (GalNAc...) threonine; partial glycan is attached at T144. T148, T152, T158, and T160 each carry an O-linked (GalNAc...) threonine glycan. Residues 150-170 are disordered; the sequence is APTPVPPPTGTPRPLRPEACR. The chain crosses the membrane as a helical span at residues 190-210; the sequence is IWAPLAGICAVLLLSLVITLI. C211 is lipidated: S-palmitoyl cysteine. Residues 211–236 lie on the Cytoplasmic side of the membrane; that stretch reads CCHRNRRRVCKCPRPLVKPRPSEKFV.

As to quaternary structure, forms disulfide-linked heterodimers with CD8B at the cell surface. Also forms homodimers in several cell types including NK-cells or peripheral blood T-lymphocytes. Interacts with the MHC class I HLA-A/B2M dimer. Interacts with LCK in a zinc-dependent manner. In terms of processing, palmitoylated, but association with CD8B seems to be more important for the enrichment of CD8A in lipid rafts. O-glycosylated. Post-translationally, phosphorylated in cytotoxic T-lymphocytes (CTLs) following activation.

The protein resides in the cell membrane. Integral membrane glycoprotein that plays an essential role in the immune response and serves multiple functions in responses against both external and internal offenses. In T-cells, functions primarily as a coreceptor for MHC class I molecule:peptide complex. The antigens presented by class I peptides are derived from cytosolic proteins while class II derived from extracellular proteins. Interacts simultaneously with the T-cell receptor (TCR) and the MHC class I proteins presented by antigen presenting cells (APCs). In turn, recruits the Src kinase LCK to the vicinity of the TCR-CD3 complex. LCK then initiates different intracellular signaling pathways by phosphorylating various substrates ultimately leading to lymphokine production, motility, adhesion and activation of cytotoxic T-lymphocytes (CTLs). This mechanism enables CTLs to recognize and eliminate infected cells and tumor cells. In NK-cells, the presence of CD8A homodimers at the cell surface provides a survival mechanism allowing conjugation and lysis of multiple target cells. CD8A homodimer molecules also promote the survival and differentiation of activated lymphocytes into memory CD8 T-cells. This is T-cell surface glycoprotein CD8 alpha chain (Cd8a) from Rattus norvegicus (Rat).